Reading from the N-terminus, the 517-residue chain is Zinc finger protein AEBP2 (517 aa).

The interval methionine 1 to isoleucine 229 is disordered. The residue at position 2 (alanine 2) is an N-acetylalanine. Phosphoserine occurs at positions 18 and 24. The span at proline 36–alanine 51 shows a compositional bias: acidic residues. The span at glycine 61–glutamate 78 shows a compositional bias: gly residues. Acidic residues predominate over residues glycine 94–serine 121. Positions alanine 122–glycine 150 are enriched in low complexity. Serine 141 is subject to Phosphoserine. Residues glycine 152 to glycine 163 show a composition bias toward basic and acidic residues. Gly residues-rich tracts occupy residues glycine 166–serine 175 and glycine 185–serine 196. Residues serine 206, serine 210, and serine 211 each carry the phosphoserine modification. An interaction with RBBP4 region spans residues methionine 209 to valine 294. Residues tyrosine 261–histidine 286 form a C2H2-type 1 zinc finger. A C2H2-type 2; degenerate zinc finger spans residues lysine 300 to histidine 322. A C2H2-type 3 zinc finger spans residues phenylalanine 328–histidine 352. Over residues histidine 352 to proline 365 the composition is skewed to polar residues. The interval histidine 352–proline 394 is disordered. Over residues methionine 377–proline 392 the composition is skewed to basic residues. A Phosphoserine modification is found at serine 390. Residues arginine 407 to serine 478 form an interaction with SUZ12 region. The important for nucleosome binding activity of the PRC2 complex stretch occupies residues threonine 495–glutamine 517.

This sequence belongs to the AEBP2/jing C2H2-type zinc-finger family. In terms of assembly, self-associates. Associates with the PRC2 complex, which consists of the core components EED, EZH1 or EZH2, SUZ12, and RBBP4, and various combinations of accessory subunits including AEBP2, JARID2, PHF19, MTF2 and EPOP. Found in a monomeric PRC2.2 (class 2) complex consisting of at least SUZ12, RBBP4, AEBP2 and JARID2. Within the PRC2 complex, interacts directly with SUZ12; competes with PHF19 for SUZ12 binding. Interacts with EED, EZH2, and RBBP4. May also interact with RBBP7.

The protein localises to the nucleus. Functionally, acts as an accessory subunit for the core Polycomb repressive complex 2 (PRC2), which mediates histone H3K27 (H3K27me3) trimethylation on chromatin leading to transcriptional repression of the affected target gene. Plays a role in nucleosome localization of the PRC2 complex. The sequence is that of Zinc finger protein AEBP2 (AEBP2) from Homo sapiens (Human).